The chain runs to 43 residues: Protein PsbN (43 aa).

Residues 7–29 (VAIFLSGLLVSFTGYALYTAFGQ) form a helical membrane-spanning segment.

This sequence belongs to the PsbN family.

It is found in the plastid. The protein localises to the chloroplast thylakoid membrane. In terms of biological role, may play a role in photosystem I and II biogenesis. In Draba nemorosa (Woodland whitlowgrass), this protein is Protein PsbN.